Consider the following 363-residue polypeptide: Zinc phosphodiesterase ELAC protein 1 (363 aa).

The Zn(2+) site is built by histidine 62, histidine 64, aspartate 66, histidine 67, histidine 182, aspartate 253, and histidine 313. Catalysis depends on aspartate 66, which acts as the Proton acceptor.

Belongs to the RNase Z family. Homodimer. Zn(2+) serves as cofactor. Widely expressed. Expressed in heart, brain, placenta, lung, liver, skeletal muscle, kidney and pancreas.

The protein resides in the cytoplasm. Its subcellular location is the cytosol. It is found in the nucleus. The catalysed reaction is Endonucleolytic cleavage of RNA, removing extra 3' nucleotides from tRNA precursor, generating 3' termini of tRNAs. A 3'-hydroxy group is left at the tRNA terminus and a 5'-phosphoryl group is left at the trailer molecule.. Its function is as follows. Zinc phosphodiesterase, which displays some tRNA 3'-processing endonuclease activity. Specifically involved in tRNA repair: acts downstream of the ribosome-associated quality control (RQC) pathway by removing a 2',3'-cyclic phosphate from tRNAs following cleavage by ANKZF1. tRNAs are then processed by TRNT1. This is Zinc phosphodiesterase ELAC protein 1 from Homo sapiens (Human).